The following is a 439-amino-acid chain: Alpha-1,3-mannosyl-glycoprotein 4-beta-N-acetylglucosaminyltransferase-like protein MGAT4E (439 aa).

It functions in the pathway protein modification; protein glycosylation. Its function is as follows. Glycosyltransferase-like protein that may participate in the transfer of N-acetylglucosamine (GlcNAc) to the core mannose residues of N-linked glycans. This is Alpha-1,3-mannosyl-glycoprotein 4-beta-N-acetylglucosaminyltransferase-like protein MGAT4E from Mus musculus (Mouse).